The sequence spans 237 residues: Isoprenyl transferase (237 aa).

Residue D14 is part of the active site. A Mg(2+)-binding site is contributed by D14. Substrate-binding positions include 15 to 18 (GNGR), W19, R27, H31, and 59 to 61 (STE). Catalysis depends on N62, which acts as the Proton acceptor. Residues W63, R65, R184, and 190 to 192 (RIS) contribute to the substrate site. E203 serves as a coordination point for Mg(2+).

It belongs to the UPP synthase family. Homodimer. Mg(2+) is required as a cofactor.

Functionally, catalyzes the condensation of isopentenyl diphosphate (IPP) with allylic pyrophosphates generating different type of terpenoids. The polypeptide is Isoprenyl transferase (Helicobacter hepaticus (strain ATCC 51449 / 3B1)).